Reading from the N-terminus, the 412-residue chain is Class E basic helix-loop-helix protein 40 (412 aa).

Residues 1–139 (MERIPSAQPP…LSGRNVETGQ (139 aa)) are essential for interaction with BMAL1, E-box binding and repressor activity against the CLOCK-BMAL1 heterodimer. Positions 52–107 (TYKLPHRLIEKKRRDRINECIAQLKDLLPEHLKLTTLGHLEKAVVLELTLKHVKAL) constitute a bHLH domain. A necessary for interaction with RXRA and repressor activity against RXRA region spans residues 75 to 79 (LKDLL). An Orange domain is found at 142–175 (FCSGFQTCAREVLQYLAKHENTRDLKSSQLVTHL). A Glycyl lysine isopeptide (Lys-Gly) (interchain with G-Cter in SUMO1, SUMO2 and SUMO3) cross-link involves residue Lys-159. Lys-167 is covalently cross-linked (Glycyl lysine isopeptide (Lys-Gly) (interchain with G-Cter in SUMO2)). Disordered stretches follow at residues 183–259 (LQGG…SEQL) and 275–309 (IGAIKQESEEPPTKKNRMQLSDDEGHFTSSDLISS). Ser-235 carries the phosphoserine modification. Basic and acidic residues predominate over residues 248-259 (ESEKGDLRSEQL). A Glycyl lysine isopeptide (Lys-Gly) (interchain with G-Cter in SUMO1); alternate cross-link involves residue Lys-279. Lys-279 participates in a covalent cross-link: Glycyl lysine isopeptide (Lys-Gly) (interchain with G-Cter in SUMO1, SUMO2 and SUMO3); alternate. A Glycyl lysine isopeptide (Lys-Gly) (interchain with G-Cter in SUMO2); alternate cross-link involves residue Lys-279. Lys-288 is covalently cross-linked (Glycyl lysine isopeptide (Lys-Gly) (interchain with G-Cter in SUMO2)). Ser-383 carries the phosphoserine modification.

In terms of assembly, homodimer. Heterodimer with BHLHE41/DEC2. Interacts with TCF3/E47. Interacts with ubiquitin-conjugating enzyme UBE2I/UBC9. Interacts with HDAC1, SUMO1, RXRA and BMAL1. Ubiquitinated; which may lead to proteasomal degradation. Post-translationally, sumoylation inhibits its ubiquitination and promotes its negative regulation of the CLOCK-BMAL1 heterodimer transcriptional activator activity.

Its subcellular location is the cytoplasm. It localises to the nucleus. In terms of biological role, transcriptional repressor involved in the regulation of the circadian rhythm by negatively regulating the activity of the clock genes and clock-controlled genes. Acts as the negative limb of a novel autoregulatory feedback loop (DEC loop) which differs from the one formed by the PER and CRY transcriptional repressors (PER/CRY loop). Both these loops are interlocked as it represses the expression of PER1/2 and in turn is repressed by PER1/2 and CRY1/2. Represses the activity of the circadian transcriptional activator: CLOCK-BMAL1|BMAL2 heterodimer by competing for the binding to E-box elements (5'-CACGTG-3') found within the promoters of its target genes. Negatively regulates its own expression and the expression of DBP and BHLHE41/DEC2. Acts as a corepressor of RXR and the RXR-LXR heterodimers and represses the ligand-induced RXRA and NR1H3/LXRA transactivation activity. May be involved in the regulation of chondrocyte differentiation via the cAMP pathway. Represses the transcription of NR0B2 and attentuates the transactivation of NR0B2 by the CLOCK-BMAL1 complex. Drives the circadian rhythm of blood pressure through transcriptional repression of ATP1B1 in the cardiovascular system. The protein is Class E basic helix-loop-helix protein 40 (BHLHE40) of Pongo abelii (Sumatran orangutan).